The following is a 413-amino-acid chain: Mitochondrial inner membrane magnesium transporter MFM1 (413 aa).

The N-terminal 35 residues, 1-35 (MRAFPRVLPFRHQRSYNNILLRTVRLFGSSLSSFD), are a transit peptide targeting the mitochondrion. N-linked (GlcNAc...) asparagine glycosylation is present at N202. The chain crosses the membrane as a helical span at residues 329–349 (LMLLGIRYAIGMLSLGGALFL). A YGMN motif is present at residues 353–356 (YGMN). The helical transmembrane segment at 367 to 387 (AYLTVTILGLISTVWLYAKGI) threads the bilayer.

This sequence belongs to the CorA metal ion transporter (MIT) (TC 1.A.35) family. Forms homooligomers. Interacts with MRS2. Post-translationally, N-glycosylated. Glycosylation is important for correct localization of the protein.

The protein resides in the mitochondrion inner membrane. In terms of biological role, mitochondrial inner membrane magnesium transporter required for mitochondrial magnesium homeostasis. Modulates the conductance of the MRS2 channel. Involved in the splicing of mRNA group II introns in mitochondria by affecting mitochondrial magnesium concentrations, which are critical for group II intron splicing. This Saccharomyces cerevisiae (strain ATCC 204508 / S288c) (Baker's yeast) protein is Mitochondrial inner membrane magnesium transporter MFM1 (MFM1).